We begin with the raw amino-acid sequence, 356 residues long: Peptide chain release factor 1 (356 aa).

Residue Q233 is modified to N5-methylglutamine.

The protein belongs to the prokaryotic/mitochondrial release factor family. Post-translationally, methylated by PrmC. Methylation increases the termination efficiency of RF1.

The protein resides in the cytoplasm. Peptide chain release factor 1 directs the termination of translation in response to the peptide chain termination codons UAG and UAA. The chain is Peptide chain release factor 1 from Bacillus licheniformis (strain ATCC 14580 / DSM 13 / JCM 2505 / CCUG 7422 / NBRC 12200 / NCIMB 9375 / NCTC 10341 / NRRL NRS-1264 / Gibson 46).